A 364-amino-acid polypeptide reads, in one-letter code: Protein RecA (364 aa).

77–84 is an ATP binding site; it reads GPESSGKT. The segment at 343 to 364 is disordered; sequence DRFLQNGGPDPDDGDGDATAEM. Residues 352-364 are compositionally biased toward acidic residues; that stretch reads DPDDGDGDATAEM.

It belongs to the RecA family.

The protein resides in the cytoplasm. In terms of biological role, can catalyze the hydrolysis of ATP in the presence of single-stranded DNA, the ATP-dependent uptake of single-stranded DNA by duplex DNA, and the ATP-dependent hybridization of homologous single-stranded DNAs. It interacts with LexA causing its activation and leading to its autocatalytic cleavage. In Rhizobium johnstonii (strain DSM 114642 / LMG 32736 / 3841) (Rhizobium leguminosarum bv. viciae), this protein is Protein RecA.